Here is a 393-residue protein sequence, read N- to C-terminus: L-methionine gamma-lyase (393 aa).

Residues 63 to 65 (YQR) and 93 to 94 (GM) each bind pyridoxal 5'-phosphate. Tyr-119 serves as a coordination point for L-homocysteine. 206–208 (SAT) serves as a coordination point for pyridoxal 5'-phosphate. Lys-209 is subject to N6-(pyridoxal phosphate)lysine. Arg-367 is a binding site for L-homocysteine. Residue Arg-367 participates in L-methionine binding.

Belongs to the trans-sulfuration enzymes family. L-methionine gamma-lyase subfamily. In terms of assembly, homotetramer. It depends on pyridoxal 5'-phosphate as a cofactor.

It catalyses the reaction L-methionine + H2O = methanethiol + 2-oxobutanoate + NH4(+). It carries out the reaction L-homocysteine + H2O = 2-oxobutanoate + hydrogen sulfide + NH4(+) + H(+). Catalyzes the alpha,gamma-elimination of L-methionine to produce methanethiol, 2-oxobutanoate and ammonia. Is also able to catalyze the alpha,gamma-elimination of L-homocysteine. The protein is L-methionine gamma-lyase of Brevibacterium sandarakinum.